Consider the following 455-residue polypeptide: Phosphoglucosamine mutase (455 aa).

Residue Ser102 is the Phosphoserine intermediate of the active site. Residues Ser102, Asp241, Asp243, and Asp245 each contribute to the Mg(2+) site. The residue at position 102 (Ser102) is a Phosphoserine.

This sequence belongs to the phosphohexose mutase family. It depends on Mg(2+) as a cofactor. In terms of processing, activated by phosphorylation.

The catalysed reaction is alpha-D-glucosamine 1-phosphate = D-glucosamine 6-phosphate. In terms of biological role, catalyzes the conversion of glucosamine-6-phosphate to glucosamine-1-phosphate. The protein is Phosphoglucosamine mutase of Legionella pneumophila (strain Corby).